A 629-amino-acid chain; its full sequence is Transferrin (629 aa).

The first 21 residues, 1 to 21 (MTIKNVLKLAALLGVLALVQA), serve as a signal peptide directing secretion. Transferrin-like domains lie at 26 to 366 (YRMC…ERDG) and 372 to 621 (MKMC…GLKC). 2 disulfides stabilise this stretch: Cys-29–Cys-63 and Cys-38–Cys-54. Position 111 (Tyr-111) interacts with Fe(3+). Disulfide bonds link Cys-135/Cys-231, Cys-184/Cys-210, Cys-207/Cys-216, Cys-270/Cys-283, Cys-375/Cys-409, and Cys-385/Cys-403. Thr-137, Arg-141, Val-143, and Gly-144 together coordinate hydrogencarbonate. A Fe(3+)-binding site is contributed by Tyr-225. Asp-408 and His-561 together coordinate Fe(3+).

This sequence belongs to the transferrin family. As to quaternary structure, monomer.

Transferrins are iron binding transport proteins which bind Fe(3+) ion in association with the binding of an anion, usually bicarbonate. This transferrin binds only one Fe(3+) ion per protein molecule. Transports iron ions from the hemolymph into the eggs during the vitellogenic stage (oogenesis). This chain is Transferrin, found in Sarcophaga peregrina (Flesh fly).